Reading from the N-terminus, the 790-residue chain is E3 ubiquitin-protein ligase Jade-2 (790 aa).

Disordered regions lie at residues 1–52 (MEEK…PSEV) and 111–130 (GPPA…SQPD). Residues serine 9 and serine 15 each carry the phosphoserine modification. Low complexity predominate over residues 9–28 (SISSDNSDTTDSHATSTSAS). An N6-acetyllysine mark is found at lysine 32 and lysine 38. A Phosphoserine modification is found at serine 117. The PHD-type 1 zinc finger occupies 199-249 (DVVCDVCRSPEGEDGNEMVFCDKCNVCVHQACYGILKVPTGSWLCRTCALG). The segment at 251–285 (QPKCLLCPKRGGALKPTRSGTKWVHVSCALWIPEV) adopts a C2HC pre-PHD-type zinc-finger fold. Lysine 298 carries the post-translational modification N6-acetyllysine. The PHD-type 2 zinc finger occupies 309 to 365 (LSCSLCKECTGTCIQCSMPSCVTAFHVTCAFDHGLEMRTILADNDEVKFKSFCQEHS). Disordered regions lie at residues 361-386 (CQEH…AGED) and 578-777 (SFMR…PREA). The span at 372 to 381 (EPTSEPTEPS) shows a compositional bias: polar residues. The segment covering 593 to 606 (KARGRTRLPAKKKP) has biased composition (basic residues). The segment covering 684–693 (AASVAADSDV) has biased composition (low complexity). Residues 737-747 (ERPKVSLHFDT) are compositionally biased toward basic and acidic residues. Acidic residues predominate over residues 757-767 (EMSDSDVEAED).

It belongs to the JADE family. In terms of assembly, component of the HBO1 complex composed at least of ING4 or ING5, MYST2/HBO1, MEAF6, and one of JADE1, JADE2 and JADE3. Interacts (via C-terminus) with KDM1A (via AOD/Tower domain).

It catalyses the reaction S-ubiquitinyl-[E2 ubiquitin-conjugating enzyme]-L-cysteine + [acceptor protein]-L-lysine = [E2 ubiquitin-conjugating enzyme]-L-cysteine + N(6)-ubiquitinyl-[acceptor protein]-L-lysine.. The protein operates within protein modification; protein ubiquitination. Scaffold subunit of some HBO1 complexes, which have a histone H4 acetyltransferase activity. Acts as an E3 ubiquitin-protein ligase mediating the ubiquitination and subsequent proteasomal degradation of target protein histone demethylase KDM1A. Also acts as a ubiquitin ligase E3 toward itself. Positive regulator of neurogenesis. This chain is E3 ubiquitin-protein ligase Jade-2 (JADE2), found in Homo sapiens (Human).